Here is a 358-residue protein sequence, read N- to C-terminus: tRNA(Ile)-lysidine synthase (358 aa).

35–40 (SGGPDS) lines the ATP pocket.

Belongs to the tRNA(Ile)-lysidine synthase family.

The protein resides in the cytoplasm. The enzyme catalyses cytidine(34) in tRNA(Ile2) + L-lysine + ATP = lysidine(34) in tRNA(Ile2) + AMP + diphosphate + H(+). Its function is as follows. Ligates lysine onto the cytidine present at position 34 of the AUA codon-specific tRNA(Ile) that contains the anticodon CAU, in an ATP-dependent manner. Cytidine is converted to lysidine, thus changing the amino acid specificity of the tRNA from methionine to isoleucine. The polypeptide is tRNA(Ile)-lysidine synthase (Bradyrhizobium sp. (strain BTAi1 / ATCC BAA-1182)).